We begin with the raw amino-acid sequence, 396 residues long: Ubiquitin-like modifier-activating enzyme 5 (396 aa).

ATP is bound by residues Gly-76, Asp-97, Lys-120, Asn-143, and Asn-177. The Zn(2+) site is built by Cys-219 and Cys-222. The Glycyl thioester intermediate role is filled by Cys-243. The Zn(2+) site is built by Cys-296 and Cys-301.

This sequence belongs to the ubiquitin-activating E1 family. UBA5 subfamily.

Functionally, E1-like enzyme which activates UFM1. The chain is Ubiquitin-like modifier-activating enzyme 5 from Drosophila ananassae (Fruit fly).